Consider the following 162-residue polypeptide: Peptide deformylase (162 aa).

Fe cation contacts are provided by C86 and H128. Residue E129 is part of the active site. H132 provides a ligand contact to Fe cation.

It belongs to the polypeptide deformylase family. The cofactor is Fe(2+).

The enzyme catalyses N-terminal N-formyl-L-methionyl-[peptide] + H2O = N-terminal L-methionyl-[peptide] + formate. In terms of biological role, removes the formyl group from the N-terminal Met of newly synthesized proteins. Requires at least a dipeptide for an efficient rate of reaction. N-terminal L-methionine is a prerequisite for activity but the enzyme has broad specificity at other positions. This Treponema pallidum (strain Nichols) protein is Peptide deformylase.